The sequence spans 352 residues: MKEQLNQLSAYQPGLSPRALKEKYGIEGDLYKLASNENLYGPSPKVKEAISAHLDELYYYPETGSPTLKAAISKHLNVDQSRILFGAGLDEVILMISRAVLTPGDTIVTSEATFGQYYHNAIVESANVIQVPLKDGGFDLEGILKEVNEDTSLVWLCNPNNPTGTYFNHESLDSFLSQVPPHVPVIIDEAYFEFVTEEDYPDTLALQQKYDNAFLLRTFSKAYGLAGLRVGYVVASEHAIEKWNIIRPPFNVTRISEYAAVAALEDQQYLKEVTHKNSVERERFYQLPQSEYFLPSQTNFIFVKTKRVNELYEALLNVGCITRPFPTGVRITIGFKEQNDKMLEVLSNFKYE.

Lys-221 carries the post-translational modification N6-(pyridoxal phosphate)lysine.

Belongs to the class-II pyridoxal-phosphate-dependent aminotransferase family. Histidinol-phosphate aminotransferase subfamily. In terms of assembly, homodimer. Requires pyridoxal 5'-phosphate as cofactor.

The enzyme catalyses L-histidinol phosphate + 2-oxoglutarate = 3-(imidazol-4-yl)-2-oxopropyl phosphate + L-glutamate. Its pathway is amino-acid biosynthesis; L-histidine biosynthesis; L-histidine from 5-phospho-alpha-D-ribose 1-diphosphate: step 7/9. The chain is Histidinol-phosphate aminotransferase from Staphylococcus aureus (strain MSSA476).